Reading from the N-terminus, the 126-residue chain is MSAPNPKAFPLADEKLSQQILDVVQQAANLRQLKKGANEATKTLNRGISEFIIMAADCEPIEILLHLPLLCEDKNVPYVFVPSRVALGRACGVSRPVIAASITTNDASAIKNQIYAVKDKIETLLI.

The protein belongs to the eukaryotic ribosomal protein eL8 family. In terms of assembly, component of the U3 snoRNP particle. Binds to the C'/D and B/C motifs in U3 snoRNA. Component of the 25S U4/U6.U5 tri-snRNP particle, a subcomplex of the spliceosome. Binds to the 5' stem-loop of U4 snRNA.

The protein resides in the nucleus. Its subcellular location is the nucleolus. Its function is as follows. Common component of the spliceosome and rRNA processing machinery. In association with the spliceosomal U4/U6.U5 tri-snRNP particle, required for splicing of pre-mRNA. In association with box C/D snoRNPs, required for processing of pre-ribosomal RNA (rRNA) and site-specific 2'-O-methylation of substrate RNAs. Essential for the accumulation and stability of U4 snRNA, U6 snRNA, and box C/D snoRNAs. This chain is 13 kDa ribonucleoprotein-associated protein (SNU13), found in Candida glabrata (strain ATCC 2001 / BCRC 20586 / JCM 3761 / NBRC 0622 / NRRL Y-65 / CBS 138) (Yeast).